We begin with the raw amino-acid sequence, 219 residues long: MASCFSVSLLARVAVVEPIRVQLWLNVVNCMIESSMHQCPPRDRHFFSSSRPILLIRRSVSTVYRFVASRTTQVLRAAKTVVKWFIIVDPLINSILINYLIDRLCTLGHAVLRVKKRKTEERQPCSPIIQHTHVKRRKRPRLRIVAIKRKRRRRRPHRIERPLSNMYPIMEIQMVAVPLALPSPTALVHYQQQQQQLPQHHPWYDLSLSEEALSTCCCS.

The next 2 helical transmembrane spans lie at valine 81 to isoleucine 101 and proline 168 to valine 188.

It is found in the membrane. This is an uncharacterized protein from Saccharomyces cerevisiae (strain ATCC 204508 / S288c) (Baker's yeast).